A 210-amino-acid chain; its full sequence is Thiamine-phosphate synthase (210 aa).

4-amino-2-methyl-5-(diphosphooxymethyl)pyrimidine-binding positions include 38 to 42 and N70; that span reads QFREK. Residues D71 and D90 each contribute to the Mg(2+) site. S107 contributes to the 4-amino-2-methyl-5-(diphosphooxymethyl)pyrimidine binding site. 132-134 is a 2-[(2R,5Z)-2-carboxy-4-methylthiazol-5(2H)-ylidene]ethyl phosphate binding site; it reads TKT. K135 lines the 4-amino-2-methyl-5-(diphosphooxymethyl)pyrimidine pocket. 183–184 serves as a coordination point for 2-[(2R,5Z)-2-carboxy-4-methylthiazol-5(2H)-ylidene]ethyl phosphate; the sequence is IS.

The protein belongs to the thiamine-phosphate synthase family. The cofactor is Mg(2+).

The catalysed reaction is 2-[(2R,5Z)-2-carboxy-4-methylthiazol-5(2H)-ylidene]ethyl phosphate + 4-amino-2-methyl-5-(diphosphooxymethyl)pyrimidine + 2 H(+) = thiamine phosphate + CO2 + diphosphate. The enzyme catalyses 2-(2-carboxy-4-methylthiazol-5-yl)ethyl phosphate + 4-amino-2-methyl-5-(diphosphooxymethyl)pyrimidine + 2 H(+) = thiamine phosphate + CO2 + diphosphate. It carries out the reaction 4-methyl-5-(2-phosphooxyethyl)-thiazole + 4-amino-2-methyl-5-(diphosphooxymethyl)pyrimidine + H(+) = thiamine phosphate + diphosphate. Its pathway is cofactor biosynthesis; thiamine diphosphate biosynthesis; thiamine phosphate from 4-amino-2-methyl-5-diphosphomethylpyrimidine and 4-methyl-5-(2-phosphoethyl)-thiazole: step 1/1. Condenses 4-methyl-5-(beta-hydroxyethyl)thiazole monophosphate (THZ-P) and 2-methyl-4-amino-5-hydroxymethyl pyrimidine pyrophosphate (HMP-PP) to form thiamine monophosphate (TMP). The sequence is that of Thiamine-phosphate synthase from Archaeoglobus fulgidus (strain ATCC 49558 / DSM 4304 / JCM 9628 / NBRC 100126 / VC-16).